The following is a 634-amino-acid chain: 1-deoxy-D-xylulose-5-phosphate synthase (634 aa).

Thiamine diphosphate contacts are provided by residues His74 and Ala115 to Ser117. Mg(2+) is bound at residue Asp146. Thiamine diphosphate contacts are provided by residues Gly147 to Ala148, Asn176, Tyr283, and Glu365. Asn176 provides a ligand contact to Mg(2+).

It belongs to the transketolase family. DXPS subfamily. In terms of assembly, homodimer. Requires Mg(2+) as cofactor. Thiamine diphosphate is required as a cofactor.

It carries out the reaction D-glyceraldehyde 3-phosphate + pyruvate + H(+) = 1-deoxy-D-xylulose 5-phosphate + CO2. Its pathway is metabolic intermediate biosynthesis; 1-deoxy-D-xylulose 5-phosphate biosynthesis; 1-deoxy-D-xylulose 5-phosphate from D-glyceraldehyde 3-phosphate and pyruvate: step 1/1. In terms of biological role, catalyzes the acyloin condensation reaction between C atoms 2 and 3 of pyruvate and glyceraldehyde 3-phosphate to yield 1-deoxy-D-xylulose-5-phosphate (DXP). The sequence is that of 1-deoxy-D-xylulose-5-phosphate synthase from Burkholderia ambifaria (strain MC40-6).